A 227-amino-acid polypeptide reads, in one-letter code: Probable chorismate pyruvate-lyase (227 aa).

Residues Arg-75, Leu-113, and Glu-173 each contribute to the substrate site. The tract at residues 192–227 (SGDWSAHPRVREHGRPLEHTASRAHPATRASDEQRR) is disordered. The segment covering 200–212 (RVREHGRPLEHTA) has biased composition (basic and acidic residues).

Belongs to the UbiC family.

It is found in the cytoplasm. The catalysed reaction is chorismate = 4-hydroxybenzoate + pyruvate. It functions in the pathway cofactor biosynthesis; ubiquinone biosynthesis. Functionally, removes the pyruvyl group from chorismate, with concomitant aromatization of the ring, to provide 4-hydroxybenzoate (4HB) for the ubiquinone pathway. This chain is Probable chorismate pyruvate-lyase, found in Paraburkholderia xenovorans (strain LB400).